A 157-amino-acid chain; its full sequence is SsrA-binding protein (157 aa).

Belongs to the SmpB family.

It is found in the cytoplasm. In terms of biological role, required for rescue of stalled ribosomes mediated by trans-translation. Binds to transfer-messenger RNA (tmRNA), required for stable association of tmRNA with ribosomes. tmRNA and SmpB together mimic tRNA shape, replacing the anticodon stem-loop with SmpB. tmRNA is encoded by the ssrA gene; the 2 termini fold to resemble tRNA(Ala) and it encodes a 'tag peptide', a short internal open reading frame. During trans-translation Ala-aminoacylated tmRNA acts like a tRNA, entering the A-site of stalled ribosomes, displacing the stalled mRNA. The ribosome then switches to translate the ORF on the tmRNA; the nascent peptide is terminated with the 'tag peptide' encoded by the tmRNA and targeted for degradation. The ribosome is freed to recommence translation, which seems to be the essential function of trans-translation. The protein is SsrA-binding protein of Clostridium novyi (strain NT).